Reading from the N-terminus, the 151-residue chain is Large ribosomal subunit protein bL9 (151 aa).

It belongs to the bacterial ribosomal protein bL9 family.

In terms of biological role, binds to the 23S rRNA. This chain is Large ribosomal subunit protein bL9, found in Prochlorococcus marinus (strain MIT 9312).